A 93-amino-acid polypeptide reads, in one-letter code: Small ribosomal subunit protein uS19 (93 aa).

It belongs to the universal ribosomal protein uS19 family.

Functionally, protein S19 forms a complex with S13 that binds strongly to the 16S ribosomal RNA. The chain is Small ribosomal subunit protein uS19 from Maridesulfovibrio salexigens (strain ATCC 14822 / DSM 2638 / NCIMB 8403 / VKM B-1763) (Desulfovibrio salexigens).